Reading from the N-terminus, the 493-residue chain is E3 ubiquitin-protein ligase Hakai (493 aa).

Disordered stretches follow at residues 1–20 (MDHNDNDLQGTNSSASLGGL) and 28–61 (IKLISKQTNKTKPAPRAPRAMNRMPAKTQAGDEE). Positions 7–16 (DLQGTNSSAS) are enriched in polar residues. An RING-type zinc finger spans residues 109–149 (CDKCGLPIKMYGRMIPCKHVFCYDCAILHEKKGDKMCPGCN). The interval 148–206 (CNEPVQRIEQCVRGSLFMCSIVQGCKRTYLSQRDLQAHINHRHMRAGKPVTRPPLEPVH) is HYB domain. The segment at 164 to 190 (FMCSIVQGCKRTYLSQRDLQAHINHRH) adopts a C2H2-type zinc-finger fold. The segment at 253 to 493 (YNQPHEDIRP…DQARYRPYYQ (241 aa)) is disordered. 4 stretches are compositionally biased toward pro residues: residues 262–276 (PPPAEMSMAPPPPRP), 342–352 (APPPPPPPPIS), 372–389 (APPPPMTSAPPPITPPPG), and 399–412 (MNHPPPGPPPPQHG). The span at 427–444 (NPNSLPQFSEDQGTLSPP) shows a compositional bias: polar residues. Pro residues predominate over residues 459-469 (PRGPPPPPRMQ). Positions 470–480 (GPPAQAPLAGP) are enriched in low complexity.

It belongs to the Hakai family. Homodimer. Interacts with tyrosine-phosphorylated SRC substrates. Component of the WMM complex, a N6-methyltransferase complex composed of a catalytic subcomplex, named MAC, and of an associated subcomplex, named MACOM. Component of the MACOM subcomplex.

The protein resides in the nucleus speckle. It localises to the nucleus. It is found in the nucleoplasm. It carries out the reaction S-ubiquitinyl-[E2 ubiquitin-conjugating enzyme]-L-cysteine + [acceptor protein]-L-lysine = [E2 ubiquitin-conjugating enzyme]-L-cysteine + N(6)-ubiquitinyl-[acceptor protein]-L-lysine.. It functions in the pathway protein modification; protein ubiquitination. Its function is as follows. E3 ubiquitin-protein ligase that mediates ubiquitination of several tyrosine-phosphorylated Src substrates. Associated component of the WMM complex, a complex that mediates N6-methyladenosine (m6A) methylation of RNAs, a modification that plays a role in the efficiency of mRNA splicing and RNA processing. The chain is E3 ubiquitin-protein ligase Hakai from Gallus gallus (Chicken).